The chain runs to 221 residues: 3-phospho-D-glycerate guanylyltransferase (221 aa).

This sequence belongs to the CofC family.

The enzyme catalyses (2R)-3-phosphoglycerate + GTP + H(+) = 3-[(R)-glyceryl]-diphospho-5'-guanosine + diphosphate. It catalyses the reaction (2S)-2-phospholactate + GTP + H(+) = (2S)-lactyl-2-diphospho-5'-guanosine + diphosphate. Its pathway is cofactor biosynthesis; coenzyme F420 biosynthesis. Functionally, guanylyltransferase that catalyzes the activation of (2R)-3-phosphoglycerate (3PG) as 3-[(R)-glyceryl]-diphospho-5'-guanosine, via the condensation of 3PG with GTP. It is involved in the biosynthesis of a derivative of the hydride carrier cofactor coenzyme F420, 3PG-F420. Can also use (2S)-2-phospholactate (2-PL), with lower turnover, and has weak activity with phosphoenolpyruvate (PEP). This Mycetohabitans rhizoxinica (strain DSM 19002 / CIP 109453 / HKI 454) (Paraburkholderia rhizoxinica) protein is 3-phospho-D-glycerate guanylyltransferase.